The primary structure comprises 426 residues: Glutamyl-tRNA reductase (426 aa).

Residues 49–52, S101, 106–108, and Q112 each bind substrate; these read TCNR and EPQ. C50 acts as the Nucleophile in catalysis. 181-186 serves as a coordination point for NADP(+); it reads GAGETI. Residues 404–426 form a disordered region; that stretch reads DRLFPEKPGLPTSPHSYPDREDR.

This sequence belongs to the glutamyl-tRNA reductase family. Homodimer.

It carries out the reaction (S)-4-amino-5-oxopentanoate + tRNA(Glu) + NADP(+) = L-glutamyl-tRNA(Glu) + NADPH + H(+). The protein operates within porphyrin-containing compound metabolism; protoporphyrin-IX biosynthesis; 5-aminolevulinate from L-glutamyl-tRNA(Glu): step 1/2. Catalyzes the NADPH-dependent reduction of glutamyl-tRNA(Glu) to glutamate 1-semialdehyde (GSA). The chain is Glutamyl-tRNA reductase from Xanthomonas campestris pv. phaseoli.